The sequence spans 374 residues: Methylthioribose-1-phosphate isomerase (374 aa).

D251 (proton donor) is an active-site residue.

It belongs to the eIF-2B alpha/beta/delta subunits family. MtnA subfamily.

Its subcellular location is the cytoplasm. The protein localises to the nucleus. It catalyses the reaction 5-(methylsulfanyl)-alpha-D-ribose 1-phosphate = 5-(methylsulfanyl)-D-ribulose 1-phosphate. It functions in the pathway amino-acid biosynthesis; L-methionine biosynthesis via salvage pathway; L-methionine from S-methyl-5-thio-alpha-D-ribose 1-phosphate: step 1/6. Its function is as follows. Catalyzes the interconversion of methylthioribose-1-phosphate (MTR-1-P) into methylthioribulose-1-phosphate (MTRu-1-P). The chain is Methylthioribose-1-phosphate isomerase from Oryza sativa subsp. indica (Rice).